The primary structure comprises 147 residues: Small ribosomal subunit protein bS6 (147 aa).

The tract at residues 103–147 is disordered; that stretch reads AARMAANLPSFPEDEDTEEKGSAPLAREEEGIGEEAQTDEAEDKE. The segment covering 133 to 147 has biased composition (acidic residues); it reads GIGEEAQTDEAEDKE.

The protein belongs to the bacterial ribosomal protein bS6 family.

Binds together with bS18 to 16S ribosomal RNA. The polypeptide is Small ribosomal subunit protein bS6 (Syntrophobacter fumaroxidans (strain DSM 10017 / MPOB)).